The following is a 366-amino-acid chain: NADP-dependent oxidoreductase domain-containing protein 1 (366 aa).

The protein belongs to the pyrroline-5-carboxylate reductase family.

Probable oxidoreductase. This Mus musculus (Mouse) protein is NADP-dependent oxidoreductase domain-containing protein 1 (Noxred1).